The following is a 557-amino-acid chain: CCR4-NOT transcription complex subunit 6 (557 aa).

4 LRR repeats span residues 52–73 (HLTA…IAKL), 75–96 (NLVY…LGNM), 98–120 (SLRE…GKLF), and 121–143 (QLQT…CLEP). The nuclease domain stretch occupies residues 153–557 (LLDNLSGTAK…VNGIHLPGRR (405 aa)). Glutamate 240 contacts Mg(2+). Residues glutamate 240, glutamate 276, histidine 361, and proline 366 each contribute to the substrate site. Aspartate 412 is a binding site for Mg(2+). The active-site Proton donor/acceptor is the aspartate 412. The substrate site is built by asparagine 414, asparagine 481, and phenylalanine 486.

It belongs to the CCR4/nocturin family. In terms of assembly, component of the CCR4-NOT complex; distinct complexes seem to exist that differ in the participation of probably mutually exclusive catalytic subunits; the complex contains two deadenylase subunits, CNOT6 or CNOT6L, and CNOT7 or CNOT8. Interacts with CNOT7 and CNOT8. Interacts with UNR. Interacts with ZFP36L1 (via N-terminus). Interacts with ZNF335. Mg(2+) is required as a cofactor.

It is found in the cytoplasm. The protein resides in the nucleus. It carries out the reaction Exonucleolytic cleavage of poly(A) to 5'-AMP.. In terms of biological role, poly(A) nuclease with 3'-5' RNase activity. Catalytic component of the CCR4-NOT complex which is one of the major cellular mRNA deadenylases and is linked to various cellular processes including bulk mRNA degradation, miRNA-mediated repression, translational repression during translational initiation and general transcription regulation. Additional complex functions may be a consequence of its influence on mRNA expression. Involved in mRNA decay mediated by the major-protein-coding determinant of instability (mCRD) of the FOS gene in the cytoplasm. In the presence of ZNF335, enhances ligand-dependent transcriptional activity of nuclear hormone receptors. Mediates cell proliferation and cell survival and prevents cellular senescence. The sequence is that of CCR4-NOT transcription complex subunit 6 (Cnot6) from Mus musculus (Mouse).